The chain runs to 388 residues: Formate-dependent phosphoribosylglycinamide formyltransferase (388 aa).

N(1)-(5-phospho-beta-D-ribosyl)glycinamide contacts are provided by residues 15-16 and Glu-75; that span reads EL. ATP contacts are provided by residues Arg-107, Lys-148, 153-158, 188-191, and Glu-196; these read SSGKGQ and EEFL. Residues 112–302 form the ATP-grasp domain; sequence DLASAELALL…EFELHLRAVL (191 aa). Residues Glu-261 and Glu-273 each contribute to the Mg(2+) site. Residues Asp-280, Lys-350, and 357–358 contribute to the N(1)-(5-phospho-beta-D-ribosyl)glycinamide site; that span reads RR.

It belongs to the PurK/PurT family. As to quaternary structure, homodimer.

It carries out the reaction N(1)-(5-phospho-beta-D-ribosyl)glycinamide + formate + ATP = N(2)-formyl-N(1)-(5-phospho-beta-D-ribosyl)glycinamide + ADP + phosphate + H(+). The protein operates within purine metabolism; IMP biosynthesis via de novo pathway; N(2)-formyl-N(1)-(5-phospho-D-ribosyl)glycinamide from N(1)-(5-phospho-D-ribosyl)glycinamide (formate route): step 1/1. Involved in the de novo purine biosynthesis. Catalyzes the transfer of formate to 5-phospho-ribosyl-glycinamide (GAR), producing 5-phospho-ribosyl-N-formylglycinamide (FGAR). Formate is provided by PurU via hydrolysis of 10-formyl-tetrahydrofolate. The sequence is that of Formate-dependent phosphoribosylglycinamide formyltransferase from Prochlorococcus marinus (strain MIT 9313).